A 255-amino-acid polypeptide reads, in one-letter code: 4-diphosphocytidyl-2-C-methyl-D-erythritol kinase (255 aa).

The active site involves K6. 95-105 (PVCAGLGGGSS) contacts ATP. D137 is an active-site residue.

It belongs to the GHMP kinase family. IspE subfamily.

It catalyses the reaction 4-CDP-2-C-methyl-D-erythritol + ATP = 4-CDP-2-C-methyl-D-erythritol 2-phosphate + ADP + H(+). It functions in the pathway isoprenoid biosynthesis; isopentenyl diphosphate biosynthesis via DXP pathway; isopentenyl diphosphate from 1-deoxy-D-xylulose 5-phosphate: step 3/6. Its function is as follows. Catalyzes the phosphorylation of the position 2 hydroxy group of 4-diphosphocytidyl-2C-methyl-D-erythritol. The sequence is that of 4-diphosphocytidyl-2-C-methyl-D-erythritol kinase from Campylobacter jejuni subsp. jejuni serotype O:2 (strain ATCC 700819 / NCTC 11168).